We begin with the raw amino-acid sequence, 106 residues long: Protein yippee-like At4g27745 (106 aa).

A Yippee domain is found at 8-105 (RLYSCCNCRN…FEKAKIVKED (98 aa)). Residues Cys12, Cys15, Cys68, and Cys71 each coordinate Zn(2+).

The protein belongs to the yippee family.

The chain is Protein yippee-like At4g27745 from Arabidopsis thaliana (Mouse-ear cress).